We begin with the raw amino-acid sequence, 157 residues long: MKIVLLVVGKTDSKLMVQATEEYIRRLSHYVSFEVEVIPDVRLGSKLSSEQQKDAEGREILARLRPSDSTVLLDERGREYSSMEFSAFLQKKMLIGTRRMVFVIGGPYGFSPAVQEAVTDRISLSRMTFSHQMIRLFFTEQVYRAMTILNHEPYHHE.

S-adenosyl-L-methionine contacts are provided by residues L73, G105, and 124–129 (LSRMTF).

Belongs to the RNA methyltransferase RlmH family. In terms of assembly, homodimer.

It is found in the cytoplasm. It catalyses the reaction pseudouridine(1915) in 23S rRNA + S-adenosyl-L-methionine = N(3)-methylpseudouridine(1915) in 23S rRNA + S-adenosyl-L-homocysteine + H(+). Functionally, specifically methylates the pseudouridine at position 1915 (m3Psi1915) in 23S rRNA. The polypeptide is Ribosomal RNA large subunit methyltransferase H (Porphyromonas gingivalis (strain ATCC BAA-308 / W83)).